The primary structure comprises 340 residues: Short-chain dehydrogenase/reductase prx1 (340 aa).

NADP(+) is bound by residues Ile60, Lys84, Asp104, Asn131, and Lys162. Ser184 serves as the catalytic Proton donor. The NADP(+) site is built by Tyr210 and Lys214. Catalysis depends on Tyr210, which acts as the Proton acceptor. The Lowers pKa of active site Tyr role is filled by Lys214.

This sequence belongs to the short-chain dehydrogenases/reductases (SDR) family.

The protein operates within sesquiterpene biosynthesis. Functionally, short-chain dehydrogenase/reductase; part of the gene cluster that mediates the biosynthesis of PR-toxin, a bicyclic sesquiterpene belonging to the eremophilane class and acting as a mycotoxin. The first step of the pathway is catalyzed by the aristolochene synthase which performs the cyclization of trans,trans-farnesyl diphosphate (FPP) to the bicyclic sesquiterpene aristolochene. Following the formation of aristolochene, the non-oxygenated aristolochene is converted to the trioxygenated intermediate eremofortin B, via 7-epi-neopetasone. This conversion appears to involve three enzymes, a hydroxysterol oxidase-like enzyme, the quinone-oxidase prx3 that forms the quinone-type-structure in the bicyclic nucleus of aristolochene with the C8-oxo group and the C-3 hydroxyl group, and the P450 monooxygenase prx9 that introduces the epoxide at the double bond between carbons 1 and 2. No monoxy or dioxy-intermediates have been reported to be released to the broth, so these three early oxidative reactions may be coupled together. Eremofortin B is further oxidized by another P450 monooxygenase, that introduces a second epoxide between carbons 7 and 11 prior to acetylation to eremofortin A by the acetyltransferase prx11. The second epoxidation may be performed by a second P450 monooxygenase. After the acetylation step, eremofortin A is converted to eremofortin C and then to PR-toxin. First the conversion of eremofortin A to eremofortin C proceeds by oxidation of the side chain of the molecule at C-12 and is catalyzed by the short-chain oxidoreductase prx1. The cytochrome P450 monooxygenase prx8 also plays a role in this step. The primary alcohol formed at C-12 is finally oxidized by the short-chain alcohol dehydrogenase prx4 that forms PR-toxin. The polypeptide is Short-chain dehydrogenase/reductase prx1 (Penicillium rubens (strain ATCC 28089 / DSM 1075 / NRRL 1951 / Wisconsin 54-1255) (Penicillium chrysogenum)).